A 417-amino-acid chain; its full sequence is Ribulose bisphosphate carboxylase large chain (417 aa).

Asparagine 103 and threonine 153 together coordinate substrate. The Proton acceptor role is filled by lysine 155. Substrate is bound at residue lysine 157. Positions 181, 183, and 184 each coordinate Mg(2+). Lysine 181 is subject to N6-carboxylysine. Catalysis depends on histidine 274, which acts as the Proton acceptor. Residues arginine 275, histidine 307, and serine 359 each contribute to the substrate site.

The protein belongs to the RuBisCO large chain family. Type I subfamily. Heterohexadecamer of 8 large chains and 8 small chains. Mg(2+) is required as a cofactor.

It is found in the plastid. The protein resides in the chloroplast. It catalyses the reaction 2 (2R)-3-phosphoglycerate + 2 H(+) = D-ribulose 1,5-bisphosphate + CO2 + H2O. It carries out the reaction D-ribulose 1,5-bisphosphate + O2 = 2-phosphoglycolate + (2R)-3-phosphoglycerate + 2 H(+). In terms of biological role, ruBisCO catalyzes two reactions: the carboxylation of D-ribulose 1,5-bisphosphate, the primary event in carbon dioxide fixation, as well as the oxidative fragmentation of the pentose substrate in the photorespiration process. Both reactions occur simultaneously and in competition at the same active site. The polypeptide is Ribulose bisphosphate carboxylase large chain (Acrostichum aureum (Golden leather fern)).